A 710-amino-acid polypeptide reads, in one-letter code: Adenylosuccinate synthetase (710 aa).

Residues 1–54 are disordered; that stretch reads MPVRRYGGRYNSSSPGVSNALNPSRTAGWPLSPSPATGSKPASTHHDPVPQEAY. Polar residues predominate over residues 10 to 25; that stretch reads YNSSSPGVSNALNPSR. Residues 44–54 are compositionally biased toward basic and acidic residues; the sequence is THHDPVPQEAY. Residues 180–186 and 210–212 contribute to the GTP site; these read GDEGKGK and GHT. The active-site Proton acceptor is the aspartate 181. Mg(2+) contacts are provided by aspartate 181 and glycine 210. Residues 181 to 184, 208 to 211, threonine 295, lysine 309, glutamine 421, threonine 437, and lysine 567 each bind IMP; these read DEGK and NAGH. Catalysis depends on histidine 211, which acts as the Proton donor. 563–569 lines the substrate pocket; sequence AVTKKPR. GTP contacts are provided by residues arginine 569 and 697–699; that span reads GNG.

Belongs to the adenylosuccinate synthetase family. In terms of assembly, homodimer. It depends on Mg(2+) as a cofactor.

It is found in the cytoplasm. It catalyses the reaction IMP + L-aspartate + GTP = N(6)-(1,2-dicarboxyethyl)-AMP + GDP + phosphate + 2 H(+). It participates in purine metabolism; AMP biosynthesis via de novo pathway; AMP from IMP: step 1/2. Its function is as follows. Plays an important role in the salvage pathway for purine nucleotide biosynthesis. Catalyzes the first committed step in the biosynthesis of AMP from IMP. This chain is Adenylosuccinate synthetase, found in Leishmania major.